The chain runs to 274 residues: Large ribosomal subunit protein uL2 (274 aa).

The interval 221–274 (RGTAMNPVDHPHGGGEGRNFGKHPVTPWGVQTKGKKTRNNKRTDKSIVRRRSKK) is disordered.

It belongs to the universal ribosomal protein uL2 family. In terms of assembly, part of the 50S ribosomal subunit. Forms a bridge to the 30S subunit in the 70S ribosome.

Its function is as follows. One of the primary rRNA binding proteins. Required for association of the 30S and 50S subunits to form the 70S ribosome, for tRNA binding and peptide bond formation. It has been suggested to have peptidyltransferase activity; this is somewhat controversial. Makes several contacts with the 16S rRNA in the 70S ribosome. The chain is Large ribosomal subunit protein uL2 from Hamiltonella defensa subsp. Acyrthosiphon pisum (strain 5AT).